The following is a 182-amino-acid chain: MEQARQVKISKFLSKHLRHTPERLGLVLAPGGWVAVDELLSACASHQFPISRADLEQVVSNNDKQRFSFDETATKIRANQGHSVEVDLQLQPQLPPPILYHGTGEKSVPAILKSGLLKMSRHHVHLSKDIETARTVGIRHGKPVIFSVDAMVMYQSGFTFYCSDNGVYLVDHVPPEYLHMMN.

The protein belongs to the KptA/TPT1 family.

In terms of biological role, removes the 2'-phosphate from RNA via an intermediate in which the phosphate is ADP-ribosylated by NAD followed by a presumed transesterification to release the RNA and generate ADP-ribose 1''-2''-cyclic phosphate (APPR&gt;P). May function as an ADP-ribosylase. In Trichormus variabilis (strain ATCC 29413 / PCC 7937) (Anabaena variabilis), this protein is Probable RNA 2'-phosphotransferase.